Here is a 261-residue protein sequence, read N- to C-terminus: MYAPLVSLMITVPVFGQHEYTHALVADLEREGADYLIVDNRGDYPRIGTERVSTPGENLGWAGGSELGFRLAFAEGYSHAMTLNNDTRVSKGFVAALLDSRLPADAGMVGPMFDVGFPFAVADEKPDAESYVPRARYRKVPAVEGTALVMSRDCWDAVGGMDLSTFGRYGWGLDLDLALRARKSGYGLYTTEMAYINHFGRKTANTHFGGHRYHWGASAAMIRGLRRTHGWPAAMGILREMGMAHHRKWHKSFPLTCPASC.

This is an uncharacterized protein from Mycobacterium tuberculosis (strain CDC 1551 / Oshkosh).